The sequence spans 276 residues: Secreted RxLR effector protein 120 (276 aa).

A signal peptide spans 1-21 (MRGAYYVITALLVVASSQTSA). Residues 48-65 (QSLRGSRDVPDDLAHEER) carry the RxLR-dEER motif. Residues 97 to 130 (GKRPRVAEKDALEKASGADEASKKPRNTATDDAF) form a disordered region. A compositionally biased stretch (basic and acidic residues) spans 101-119 (RVAEKDALEKASGADEASK).

This sequence belongs to the RxLR effector family.

It localises to the secreted. The protein localises to the host nucleus. In terms of biological role, secreted effector that completely suppresses the host cell death induced by cell death-inducing proteins. The chain is Secreted RxLR effector protein 120 from Plasmopara viticola (Downy mildew of grapevine).